Here is a 108-residue protein sequence, read N- to C-terminus: uncharacterized protein (108 aa).

A helical transmembrane segment spans residues 15 to 37; sequence SYYFYIFWNFFLPMFIVYRGFGL.

The protein localises to the membrane. This is an uncharacterized protein from Archaeoglobus fulgidus (strain ATCC 49558 / DSM 4304 / JCM 9628 / NBRC 100126 / VC-16).